The sequence spans 336 residues: Ketoreductase adrE (336 aa).

Position 171 (Y171) interacts with NADP(+).

It belongs to the NAD(P)-dependent epimerase/dehydratase family. Dihydroflavonol-4-reductase subfamily.

Its pathway is secondary metabolite biosynthesis; terpenoid biosynthesis. In terms of biological role, ketoreductase; part of the gene cluster that mediates the biosynthesis of andrastins, meroterpenoid compounds that exhibit inhibitory activity against ras farnesyltransferase, suggesting that they could be promising leads for antitumor agents. The first step of the pathway is the synthesis of 3,5-dimethylorsellinic acid (DMOA) by the polyketide synthase adrD via condensation of one acetyl-CoA starter unit with 3 malonyl-CoA units and 2 methylations. DMAO is then converted to farnesyl-DMAO by the prenyltransferase adrG. The methyltransferase adrK catalyzes the methylation of the carboxyl group of farnesyl-DMAO to farnesyl-DMAO methyl ester which is further converted to epoxyfarnesyl-DMAO methyl ester by the FAD-dependent monooxygenase adrH. The terpene cyclase adrI then catalyzes the carbon skeletal rearrangement to generate the andrastin E, the first compound in the pathway having the andrastin scaffold, with the tetracyclic ring system. The post-cyclization tailoring enzymes adrF, adrE, adrJ, and adrA, are involved in the conversion of andrastin E into andrastin A. The short chain dehydrogenase adrF is responsible for the oxidation of the C-3 a hydroxyl group of andrastin E to yield the corresponding ketone, andrastin D. The ketoreductase adrE stereoselectively reduces the carbonyl moiety to reverse the stereochemistry of the C-3 position to yield andrastin F. The acetyltransferase adrJ is the acetyltransferase that attaches the acetyl group to the C-3 hydroxyl group of andrastin F to yield andrastin C. Finally, the cytochrome P450 monooxygenase adrA catalyzes two sequential oxidation reactions of the C-23 methyl group, to generate the corresponding alcohol andrastin B, and aldehyde andrastin A. This is Ketoreductase adrE from Penicillium rubens (strain ATCC 28089 / DSM 1075 / NRRL 1951 / Wisconsin 54-1255) (Penicillium chrysogenum).